A 208-amino-acid polypeptide reads, in one-letter code: Small ribosomal subunit protein uS4 (208 aa).

Residues 98 to 160 form the S4 RNA-binding domain; the sequence is CRLDNVVYRM…AKKQSRIQLA (63 aa).

The protein belongs to the universal ribosomal protein uS4 family. As to quaternary structure, part of the 30S ribosomal subunit. Contacts protein S5. The interaction surface between S4 and S5 is involved in control of translational fidelity.

Functionally, one of the primary rRNA binding proteins, it binds directly to 16S rRNA where it nucleates assembly of the body of the 30S subunit. With S5 and S12 plays an important role in translational accuracy. The polypeptide is Small ribosomal subunit protein uS4 (Vesicomyosocius okutanii subsp. Calyptogena okutanii (strain HA)).